A 227-amino-acid polypeptide reads, in one-letter code: Trypsin (227 aa).

Residues 1–223 enclose the Peptidase S1 domain; sequence IVGGEDANVQ…YYDVLMEQIN (223 aa). Residues Cys27 and Cys43 are joined by a disulfide bond. Residues His42 and Asp88 each act as charge relay system in the active site. 2 cysteine pairs are disulfide-bonded: Cys150/Cys164 and Cys175/Cys199. Ser179 functions as the Charge relay system in the catalytic mechanism.

The protein belongs to the peptidase S1 family.

The catalysed reaction is Preferential cleavage: Arg-|-Xaa, Lys-|-Xaa.. This Saccharopolyspora erythraea (Streptomyces erythraeus) protein is Trypsin.